Consider the following 154-residue polypeptide: Large ribosomal subunit protein uL13 (154 aa).

This sequence belongs to the universal ribosomal protein uL13 family. As to quaternary structure, part of the 50S ribosomal subunit.

In terms of biological role, this protein is one of the early assembly proteins of the 50S ribosomal subunit, although it is not seen to bind rRNA by itself. It is important during the early stages of 50S assembly. The sequence is that of Large ribosomal subunit protein uL13 from Bartonella tribocorum (strain CIP 105476 / IBS 506).